The chain runs to 380 residues: Probable inactive dehydrogenase easA (380 aa).

FMN is bound by residues 25–27 (PMT), alanine 60, glutamine 102, and histidine 171. 2 residues coordinate substrate: histidine 171 and asparagine 174. FMN contacts are provided by residues lysine 223, glycine 299, 324–325 (GR), and arginine 325. A substrate-binding site is contributed by tyrosine 352.

The protein belongs to the NADH:flavin oxidoreductase/NADH oxidase family.

In terms of biological role, probable inactive dehydrogenase; part of the gene cluster that mediates the biosynthesis of fungal ergot alkaloid. DmaW catalyzes the first step of ergot alkaloid biosynthesis by condensing dimethylallyl diphosphate (DMAP) and tryptophan to form 4-dimethylallyl-L-tryptophan. The second step is catalyzed by the methyltransferase easF that methylates 4-dimethylallyl-L-tryptophan in the presence of S-adenosyl-L-methionine, resulting in the formation of 4-dimethylallyl-L-abrine. The catalase easC and the FAD-dependent oxidoreductase easE then transform 4-dimethylallyl-L-abrine to chanoclavine-I which is further oxidized by easD in the presence of NAD(+), resulting in the formation of chanoclavine-I aldehyde. Agroclavine dehydrogenase easG then mediates the conversion of chanoclavine-I aldehyde to agroclavine via a non-enzymatic adduct reaction: the substrate is an iminium intermediate that is formed spontaneously from chanoclavine-I aldehyde in the presence of glutathione. The presence of easA is not required to complete this reaction. Further conversion of agroclavine to paspalic acid is a two-step process involving oxidation of agroclavine to elymoclavine and of elymoclavine to paspalic acid, the second step being performed by the elymoclavine oxidase cloA. Paspalic acid is then further converted to D-lysergic acid. Ergopeptines are assembled from D-lysergic acid and three different amino acids by the D-lysergyl-peptide-synthetases composed each of a monomudular and a trimodular nonribosomal peptide synthetase subunit. LpsB and lpsC encode the monomodular subunits responsible for D-lysergic acid activation and incorporation into the ergopeptine backbone. LpsA1 and A2 subunits encode the trimodular nonribosomal peptide synthetase assembling the tripeptide portion of ergopeptines. LpsA1 is responsible for formation of the major ergopeptine, ergotamine, and lpsA2 for alpha-ergocryptine, the minor ergopeptine of the total alkaloid mixture elaborated by C.purpurea. D-lysergyl-tripeptides are assembled by the nonribosomal peptide synthetases and released as N-(D-lysergyl-aminoacyl)-lactams. Cyclolization of the D-lysergyl-tripeptides is performed by the Fe(2+)/2-ketoglutarate-dependent dioxygenase easH which introduces a hydroxyl group into N-(D-lysergyl-aminoacyl)-lactam at alpha-C of the aminoacyl residue followed by spontaneous condensation with the terminal lactam carbonyl group. The chain is Probable inactive dehydrogenase easA from Claviceps purpurea (strain 20.1) (Ergot fungus).